The sequence spans 562 residues: Probable malate:quinone oxidoreductase (562 aa).

The disordered stretch occupies residues 535–562 (SATPADPTIAPKNQHSTTYNANSEMQAL). The span at 545–562 (PKNQHSTTYNANSEMQAL) shows a compositional bias: polar residues.

It belongs to the MQO family. It depends on FAD as a cofactor.

It carries out the reaction (S)-malate + a quinone = a quinol + oxaloacetate. It functions in the pathway carbohydrate metabolism; tricarboxylic acid cycle; oxaloacetate from (S)-malate (quinone route): step 1/1. This is Probable malate:quinone oxidoreductase from Xylella fastidiosa (strain M23).